The sequence spans 212 residues: Phosphatidylserine decarboxylase proenzyme (212 aa).

The active-site Schiff-base intermediate with substrate; via pyruvic acid is the Ser182. Residue Ser182 is modified to Pyruvic acid (Ser); by autocatalysis.

This sequence belongs to the phosphatidylserine decarboxylase family. PSD-A subfamily. As to quaternary structure, heterodimer of a large membrane-associated beta subunit and a small pyruvoyl-containing alpha subunit. Requires pyruvate as cofactor. In terms of processing, is synthesized initially as an inactive proenzyme. Formation of the active enzyme involves a self-maturation process in which the active site pyruvoyl group is generated from an internal serine residue via an autocatalytic post-translational modification. Two non-identical subunits are generated from the proenzyme in this reaction, and the pyruvate is formed at the N-terminus of the alpha chain, which is derived from the carboxyl end of the proenzyme. The post-translation cleavage follows an unusual pathway, termed non-hydrolytic serinolysis, in which the side chain hydroxyl group of the serine supplies its oxygen atom to form the C-terminus of the beta chain, while the remainder of the serine residue undergoes an oxidative deamination to produce ammonia and the pyruvoyl prosthetic group on the alpha chain.

The protein localises to the cell membrane. It catalyses the reaction a 1,2-diacyl-sn-glycero-3-phospho-L-serine + H(+) = a 1,2-diacyl-sn-glycero-3-phosphoethanolamine + CO2. It functions in the pathway phospholipid metabolism; phosphatidylethanolamine biosynthesis; phosphatidylethanolamine from CDP-diacylglycerol: step 2/2. Catalyzes the formation of phosphatidylethanolamine (PtdEtn) from phosphatidylserine (PtdSer). This is Phosphatidylserine decarboxylase proenzyme from Paraburkholderia phytofirmans (strain DSM 17436 / LMG 22146 / PsJN) (Burkholderia phytofirmans).